Consider the following 325-residue polypeptide: Tetraacyldisaccharide 4'-kinase (325 aa).

ATP is bound at residue 55–62 (TAGGNGKT).

Belongs to the LpxK family.

The catalysed reaction is a lipid A disaccharide + ATP = a lipid IVA + ADP + H(+). Its pathway is glycolipid biosynthesis; lipid IV(A) biosynthesis; lipid IV(A) from (3R)-3-hydroxytetradecanoyl-[acyl-carrier-protein] and UDP-N-acetyl-alpha-D-glucosamine: step 6/6. Transfers the gamma-phosphate of ATP to the 4'-position of a tetraacyldisaccharide 1-phosphate intermediate (termed DS-1-P) to form tetraacyldisaccharide 1,4'-bis-phosphate (lipid IVA). This chain is Tetraacyldisaccharide 4'-kinase, found in Salmonella agona (strain SL483).